Reading from the N-terminus, the 1080-residue chain is Ubiquitin carboxyl-terminal hydrolase 8 (1080 aa).

One can recognise an MIT domain in the interval 33-116 (TKNYIHSAQK…ESLKLRYEEA (84 aa)). Residues 119-173 (RKQLEEKDRREEEQLQQQKRQEMGREDSGAAAKRSVENLLDSKTKTQRINGEKSE) show a composition bias toward basic and acidic residues. Residues 119–176 (RKQLEEKDRREEEQLQQQKRQEMGREDSGAAAKRSVENLLDSKTKTQRINGEKSEGAA) are disordered. Ser-160 carries the post-translational modification Phosphoserine. Residues 195 to 313 (KNTSLIIMDA…WLLCYPQFTT (119 aa)) enclose the Rhodanese domain. Low complexity predominate over residues 379-393 (ALAGPGAAPRAEASP). 3 disordered regions span residues 379–455 (ALAG…TDEE), 468–605 (EKNK…RSEE), and 642–710 (PPEM…KPPC). Ser-392 is modified (phosphoserine). The SH3-binding motif lies at 405 to 413 (PQVDRTKKP). Residues 417–427 (LPEDHRIKSEN) are compositionally biased toward basic and acidic residues. Ser-446 is modified (phosphoserine). 3 stretches are compositionally biased toward basic and acidic residues: residues 468–535 (EKNK…RELS), 549–577 (SKSE…KRPA), and 593–605 (AQRE…RSEE). Phosphothreonine is present on Thr-569. Over residues 678–688 (SYSSPDITQAL) the composition is skewed to polar residues. Phosphoserine occurs at positions 680 and 681. Residues 739-1071 (TGLRNLGNTC…AAYILFYTSL (333 aa)) enclose the USP domain. The active-site Nucleophile is the Cys-748. The residue at position 907 (Thr-907) is a Phosphothreonine. Residue His-1029 is the Proton acceptor of the active site.

This sequence belongs to the peptidase C19 family. As to quaternary structure, forms a ternary complex with RNF128 and OTUB1. Interacts (via C-terminal UCH catalytic domain) with OTUB1 isoform 1. Interacts with STAM2 (via SH3 domain). Interacts with DNAJB3, EGFR, EPS15, RASGRF1, RNF41, YWHAE, YWHAG and YWHAZ. Interacts with NBR1, RASGRF1, RNF41 and IST1. Associates with the ESCRT-0 complex and with microtubules. Interacts with BIRC6/bruce and KIF23/MKLP1. In terms of processing, phosphorylation of Ser-680 is essential for interaction with YWHAE and for cytosol localization. Undergoes dephosphorylation at Ser-680 in the M phase. Tyrosine-phosphorylated in its N-terminal half in an EGFR-dependent manner. Post-translationally, ubiquitinated. Inactive form is mostly monoubiquitinated, but polyubiquitination happens too. Ubiquitination is increased in EGF-stimulated cells. Ubiquitination of active form is undetectable, suggesting a possibility that USP8 deubiquitinates itself, thereby regulating its own function. As to expression, highly expressed in testis. Expressed at intermediate level in brain.

The protein localises to the cytoplasm. The protein resides in the nucleus. It localises to the endosome membrane. Its subcellular location is the cell membrane. The catalysed reaction is Thiol-dependent hydrolysis of ester, thioester, amide, peptide and isopeptide bonds formed by the C-terminal Gly of ubiquitin (a 76-residue protein attached to proteins as an intracellular targeting signal).. In terms of biological role, hydrolase that can remove conjugated ubiquitin from proteins and therefore plays an important regulatory role at the level of protein turnover by preventing degradation. Converts both 'Lys-48' an 'Lys-63'-linked ubiquitin chains. Catalytic activity is enhanced in the M phase. Involved in cell proliferation. Required to enter into S phase in response to serum stimulation. May regulate T-cell anergy mediated by RNF128 via the formation of a complex containing RNF128 and OTUB1. Probably regulates the stability of STAM2 and RASGRF1. Regulates endosomal ubiquitin dynamics, cargo sorting, membrane traffic at early endosomes, and maintenance of ESCRT-0 stability. The level of protein ubiquitination on endosomes is essential for maintaining the morphology of the organelle. Deubiquitinates EPS15 and controls tyrosine kinase stability. Removes conjugated ubiquitin from EGFR thus regulating EGFR degradation and downstream MAPK signaling. Involved in acrosome biogenesis through interaction with the spermatid ESCRT-0 complex and microtubules. Deubiquitinates BIRC6/bruce and KIF23/MKLP1. Deubiquitinates BACE1 which inhibits BACE1 lysosomal degradation and modulates BACE-mediated APP cleavage and amyloid-beta formation. The polypeptide is Ubiquitin carboxyl-terminal hydrolase 8 (Mus musculus (Mouse)).